Consider the following 355-residue polypeptide: Putative L-lysine 2,3-aminomutase (355 aa).

Positions 93 to 308 (VHQYANRVLM…KERLSGLSLP (216 aa)) constitute a Radical SAM core domain. Cys108, Cys112, and Cys115 together coordinate [4Fe-4S] cluster. The residue at position 320 (Lys320) is an N6-(pyridoxal phosphate)lysine.

It belongs to the radical SAM superfamily. KamA family. [4Fe-4S] cluster serves as cofactor. Pyridoxal 5'-phosphate is required as a cofactor.

The protein is Putative L-lysine 2,3-aminomutase of Treponema pallidum (strain Nichols).